Consider the following 1071-residue polypeptide: Tricorn protease (1071 aa).

The interval 39 to 310 (MPNLLLNPDI…EKIEKIEIGD (272 aa)) is six-bladed beta propeller. The interval 131-132 (RR) is binds the substrate's C-terminus. Positions 326 to 675 (AEDFSPLDGD…EDERTVETDK (350 aa)) are seven-bladed beta propeller. The interval 679–745 (VSSIHEEFLQ…VEMQGEYRTS (67 aa)) is C-1; helical bundle. Residue His746 is the Charge relay system of the active site. Residues 761-855 (RSGRIACDFK…DLMIDILDDD (95 aa)) form a PDZ-like region. The segment at 856–1061 (RFIRYRSWVE…IDALIEELRN (206 aa)) is C-2; alpha-beta sandwich. Residue 916–918 (GGG) participates in substrate binding. The active-site Nucleophile is Ser965. 993–995 (GIT) contributes to the substrate binding site. The active-site Charge relay system is the Glu1023.

It belongs to the peptidase S41B family. Part of the Tricorn proteolytic complex. Assembles to form a hexameric toroid, 20 copies of which may then assemble to form an icosahedral supermolecule of 14.6 MDa.

The protein resides in the cytoplasm. In terms of biological role, tricorn degrades oligopeptides (probably derived from the proteasome) and channels the products to F1, F2 and F3 proteases, which then catalyze the terminal degradation step, yielding free amino acids. In Thermoplasma acidophilum (strain ATCC 25905 / DSM 1728 / JCM 9062 / NBRC 15155 / AMRC-C165), this protein is Tricorn protease (tri).